The sequence spans 1695 residues: MQDGSLNGLSHHNDERVNHENEDKSLNTSALGDSPDSANRELIPSESKENGVPTDSIEGPPSKRRKLAGPDNSRRSTPRPPSPPWKKAGVDGPTSFLQDGKRRSSRVNAIPLELQPPSDKRKTRAAQRSTVNKNLSGNGKVVASSPLSMSVSQSGINGKHTGGNLTTGSPRTATPRGASARRRRISRSPPRQTPSRTRSQSSATSAPNDPTSHNARSKRSHSNVTSTPTIGIDELWNDIGGETDLGDEQGQRVPRLRIKVKKPVIGFQHPSHVIPPRKYNSFREWLESGEGRIEDGAVLTPEAALVEARKRCRVLEATEPGGLLSPEVCSAYLPEQQEEPPQQYSHQDHLVAHALYFKKLLDQEHRRHRNTARLLAQWCADAWRKRNKRPEDILREQQEEVRVKRKQLARDLQKMFDLARAEVDRMRLARWEEERKVEDQRALDRAIKQSTMLFEKRRLEILGETGSDFLDSTDAEESGTDATTSDAEEDESNMSSTDSETEDEDEVDDDEGLTAEELRQKYADLPQSSLVSDRESVASDTSESSDGTRTSHILQNIEDINDSQGETPLEQIELDEVDPMLLDDSEDESTDMDDDMGDSDEDGDADGTDSDDESDDGPGLLGFFSSKDRVLNDAHRFDDEGDDPLAVSNHEGGSGFDDDGQSVSVDEDGDEELEDADEVSLVPNGPSNSVSISQSTAEVSPVTETPDEEPDEQAEVVDTDMAAAAPSEGPAPLEASAPLEDLVAIDKRGDAMGECHRQQCSPLVNNLDEQELRQNGGASSEASPGTLATKPSEPESISSFEAPGEKPPQPSESPAPGLKTPIPHLLRGTLREYQHYGLDWLAGLYNNHINGILADEMGLGKTIQTIALLAHLAVEHEVWGPHLVVVPTSVILNWEMEFKKWCPGFKIMTYYGSIEERRQKRKGWTDDTSWNVLITSYQLVLQDQQVLKRRNWHYMVLDEAHNIKNFRSQKWQTLLTFRTRARLLLTGTPLQNNLTELWSLLFFLMPSDGDGTGIEGFADLRNFSEWFRRPVEQILEHGRETMDDETKRVVTKLHTILRPYILRRLKADVEKQMPAKYEHVVYCRLSKRQRFLYDGFMSMAQTKETLASGNYLSIINCLMQLRKVCNHPDLFETRQISTSFVMHHSVATEYASKEQLVRRRLLYEHPLTKLDLDFLNLVPISREDISRRLADDSTRLMAYGPFNILRERQYKRTNWQMMFDGSTVQSTLEALENDARKRRMAELERCLYFESKRHGRRPVYGTSLVEFLTADSKQKPTLGGRPQTQSLAEWLSNRSSILASMILSIEERSQAMDGYVRRFACVTPAAVASGITEAALTPIETRYLTEKERFPPYDPFHEAQMRLSIAFPDKRLLQYDCGKLQRLDKLLRDLKAGGHRALIFTQMTKMLDILEQFLNIHGHRYLRLDGTTKVEQRQILTDRFNNDDRILVFILSSRSGGLGINLTGADTVIFYDLDWNPAMDKQCQDRCHRIGQTRDVHIYRFVSEHTIESNILRKANQKRMLDDVVIQEGEFTTDYFTKLDVRDMIGEEAEAQDEASAAMDRVLSSRVATGGSRVFEQAEDKEDIDAAKNAQKEMEQADNDDFGDRSISHTPGQVGTPLATGPQEGETPGAQLITTPQIHGVDETVDVEPQPGHIDDYLLRFMEWNMKDEPLVLPPDKTKKKSKKGKEHRLSKRRR.

Over residues 1–10 (MQDGSLNGLS) the composition is skewed to polar residues. Residues 1-229 (MQDGSLNGLS…SHSNVTSTPT (229 aa)) form a disordered region. Residues 11-25 (HHNDERVNHENEDKS) are compositionally biased toward basic and acidic residues. Polar residues-rich tracts occupy residues 126 to 137 (AQRSTVNKNLSG) and 145 to 156 (SPLSMSVSQSGI). Low complexity predominate over residues 187–207 (RSPPRQTPSRTRSQSSATSAP). In terms of domain architecture, HSA spans 334–408 (PEQQEEPPQQ…EEVRVKRKQL (75 aa)). 2 disordered regions span residues 467-738 (SDFL…ASAP) and 772-821 (LRQN…LKTP). Over residues 499-514 (SETEDEDEVDDDEGLT) the composition is skewed to acidic residues. Over residues 538–554 (ASDTSESSDGTRTSHIL) the composition is skewed to polar residues. Acidic residues predominate over residues 572 to 616 (IELDEVDPMLLDDSEDESTDMDDDMGDSDEDGDADGTDSDDESDD). Basic and acidic residues predominate over residues 626-638 (SKDRVLNDAHRFD). Residues 656–678 (FDDDGQSVSVDEDGDEELEDADE) show a composition bias toward acidic residues. The span at 685–697 (GPSNSVSISQSTA) shows a compositional bias: polar residues. The segment covering 705 to 718 (TPDEEPDEQAEVVD) has biased composition (acidic residues). The 166-residue stretch at 842 to 1007 (AGLYNNHING…WSLLFFLMPS (166 aa)) folds into the Helicase ATP-binding domain. 855–862 (DEMGLGKT) is an ATP binding site. The short motif at 958 to 961 (DEAH) is the DEAH box element. The 151-residue stretch at 1382–1532 (RLDKLLRDLK…DVVIQEGEFT (151 aa)) folds into the Helicase C-terminal domain. Disordered regions lie at residues 1590 to 1625 (AQKEMEQADNDDFGDRSISHTPGQVGTPLATGPQEG) and 1669 to 1695 (EPLVLPPDKTKKKSKKGKEHRLSKRRR). Positions 1678-1695 (TKKKSKKGKEHRLSKRRR) are enriched in basic residues.

It belongs to the SNF2/RAD54 helicase family. SWR1 subfamily. As to quaternary structure, component of the SWR1 chromatin-remodeling complex.

The protein localises to the nucleus. The enzyme catalyses ATP + H2O = ADP + phosphate + H(+). Catalytic component of the SWR1 complex which mediates the ATP-dependent exchange of histone H2A for the H2A variant HZT1 leading to transcriptional regulation of selected genes by chromatin remodeling. The polypeptide is Helicase swr1 (swr1) (Aspergillus fumigatus (strain ATCC MYA-4609 / CBS 101355 / FGSC A1100 / Af293) (Neosartorya fumigata)).